The chain runs to 507 residues: BPI fold-containing family C protein (507 aa).

Positions 1–23 (MCTKTIPVLWGCFLLWNLYVSSS) are cleaved as a signal peptide. N-linked (GlcNAc...) asparagine glycans are attached at residues Asn79, Asn92, and Asn113. Cys161 and Cys200 are disulfide-bonded. Asn213, Asn225, Asn257, Asn301, Asn355, Asn372, and Asn415 each carry an N-linked (GlcNAc...) asparagine glycan.

The protein belongs to the BPI/LBP/Plunc superfamily. BPI/LBP family. Detected in the basal layer of the epidermis from inflammatory skin from psoriasis patients, but not in normal skin.

Its subcellular location is the secreted. The sequence is that of BPI fold-containing family C protein (BPIFC) from Homo sapiens (Human).